The primary structure comprises 71 residues: U3-scytotoxin-Sth1h (71 aa).

An N-terminal signal peptide occupies residues Met-1–Ala-33. The propeptide occupies Glu-34–Arg-39. Cystine bridges form between Cys-46-Cys-60, Cys-53-Cys-64, and Cys-59-Cys-69.

Expressed by the venom gland.

It is found in the secreted. Probable insect neurotoxin with ion channel impairing activity. Does not show activity on 45 human receptors from 9 families (5-hydroxytryptamine, adrenergic, dopamine, muscarinic, histamine, neurotransmitter, opioid, sigma, and gaba(A) receptors). In vivo, when mixed with U3-SYTX-Sth1a does not cause paralytic or lethal activity when injected into crickets. It is noteworthy that crickets are evolutionarily distant from prey species. The protein is U3-scytotoxin-Sth1h of Scytodes thoracica (Spitting spider).